A 286-amino-acid chain; its full sequence is Thiamine-monophosphate kinase (286 aa).

The Mg(2+) site is built by aspartate 22, serine 36, threonine 37, and aspartate 38. Aspartate 45 is a substrate binding site. Aspartate 66 and aspartate 111 together coordinate Mg(2+). Residues glycine 110 to aspartate 111 and arginine 136 each bind ATP. Aspartate 191 is a Mg(2+) binding site. Serine 193 is a binding site for ATP. Aspartate 194 contributes to the Mg(2+) binding site. Tyrosine 282 is a substrate binding site.

This sequence belongs to the thiamine-monophosphate kinase family.

It carries out the reaction thiamine phosphate + ATP = thiamine diphosphate + ADP. It functions in the pathway cofactor biosynthesis; thiamine diphosphate biosynthesis; thiamine diphosphate from thiamine phosphate: step 1/1. In terms of biological role, catalyzes the ATP-dependent phosphorylation of thiamine-monophosphate (TMP) to form thiamine-pyrophosphate (TPP), the active form of vitamin B1. The protein is Thiamine-monophosphate kinase of Methanospirillum hungatei JF-1 (strain ATCC 27890 / DSM 864 / NBRC 100397 / JF-1).